Consider the following 219-residue polypeptide: Probable nicotinate-nucleotide adenylyltransferase (219 aa).

Belongs to the NadD family.

The enzyme catalyses nicotinate beta-D-ribonucleotide + ATP + H(+) = deamido-NAD(+) + diphosphate. It participates in cofactor biosynthesis; NAD(+) biosynthesis; deamido-NAD(+) from nicotinate D-ribonucleotide: step 1/1. Its function is as follows. Catalyzes the reversible adenylation of nicotinate mononucleotide (NaMN) to nicotinic acid adenine dinucleotide (NaAD). This chain is Probable nicotinate-nucleotide adenylyltransferase, found in Chromohalobacter salexigens (strain ATCC BAA-138 / DSM 3043 / CIP 106854 / NCIMB 13768 / 1H11).